Consider the following 370-residue polypeptide: GTPase Obg (370 aa).

One can recognise an Obg domain in the interval 1–159; that stretch reads MKFIDEARIE…RMVRLELKVL (159 aa). Residues 127–147 form a disordered region; sequence NLHFKSSTNRAPRQKTDGKPG. The OBG-type G domain maps to 160–334; the sequence is ADVGLLGMPN…LCYAVYDYLA (175 aa). GTP-binding positions include 166–173, 191–195, 213–216, 284–287, and 315–317; these read GMPNAGKS, FTTLA, DIPG, NKLD, and SAL. Mg(2+) is bound by residues S173 and T193.

It belongs to the TRAFAC class OBG-HflX-like GTPase superfamily. OBG GTPase family. In terms of assembly, monomer. Mg(2+) is required as a cofactor.

The protein resides in the cytoplasm. An essential GTPase which binds GTP, GDP and possibly (p)ppGpp with moderate affinity, with high nucleotide exchange rates and a fairly low GTP hydrolysis rate. Plays a role in control of the cell cycle, stress response, ribosome biogenesis and in those bacteria that undergo differentiation, in morphogenesis control. The chain is GTPase Obg from Paraburkholderia phymatum (strain DSM 17167 / CIP 108236 / LMG 21445 / STM815) (Burkholderia phymatum).